Here is a 246-residue protein sequence, read N- to C-terminus: ATP synthase subunit a (246 aa).

Residues 1–3 (MFY) constitute a propeptide, removed in mature form. A run of 7 helical transmembrane segments spans residues 20–40 (ILTL…SIIF), 56–76 (WGVA…SQIG), 82–102 (FFPL…ISMI), 112–132 (LVAI…LGLY), 138–158 (FFAL…LVLI), 176–196 (ANIL…VNLM), and 203–223 (FIGG…EVGI).

It belongs to the ATPase A chain family. F-type ATPases have 2 components, CF(1) - the catalytic core - and CF(0) - the membrane proton channel. CF(1) has five subunits: alpha(3), beta(3), gamma(1), delta(1), epsilon(1). CF(0) has three main subunits: a, b and c.

Its subcellular location is the mitochondrion inner membrane. In terms of biological role, mitochondrial membrane ATP synthase (F(1)F(0) ATP synthase or Complex V) produces ATP from ADP in the presence of a proton gradient across the membrane which is generated by electron transport complexes of the respiratory chain. F-type ATPases consist of two structural domains, F(1) - containing the extramembraneous catalytic core and F(0) - containing the membrane proton channel, linked together by a central stalk and a peripheral stalk. During catalysis, ATP synthesis in the catalytic domain of F(1) is coupled via a rotary mechanism of the central stalk subunits to proton translocation. Key component of the proton channel; it may play a direct role in the translocation of protons across the membrane. In Candida albicans (strain SC5314 / ATCC MYA-2876) (Yeast), this protein is ATP synthase subunit a (ATP6).